A 596-amino-acid chain; its full sequence is Arginine--tRNA ligase (596 aa).

The short motif at 139–149 is the 'HIGH' region element; the sequence is ANPTGPLHVGH.

It belongs to the class-I aminoacyl-tRNA synthetase family. As to quaternary structure, monomer.

The protein resides in the cytoplasm. It catalyses the reaction tRNA(Arg) + L-arginine + ATP = L-arginyl-tRNA(Arg) + AMP + diphosphate. The protein is Arginine--tRNA ligase of Paraburkholderia phytofirmans (strain DSM 17436 / LMG 22146 / PsJN) (Burkholderia phytofirmans).